We begin with the raw amino-acid sequence, 557 residues long: Potassium-transporting ATPase potassium-binding subunit (557 aa).

12 helical membrane passes run 5–25, 63–83, 132–152, 170–190, 253–273, 283–303, 329–349, 356–376, 379–399, 416–436, 484–504, and 526–546; these read GFLL…PLGS, LCAI…MLLG, GLTV…FALI, LLRI…LFFI, FVQM…FGEV, LLWA…WAEV, VLVS…AVIA, ALGG…FGGV, GLYG…LMIG, LTAL…ALAM, LLAF…MAIA, and LFVG…FIPA.

The protein belongs to the KdpA family. In terms of assembly, the system is composed of three essential subunits: KdpA, KdpB and KdpC.

Its subcellular location is the cell inner membrane. Part of the high-affinity ATP-driven potassium transport (or Kdp) system, which catalyzes the hydrolysis of ATP coupled with the electrogenic transport of potassium into the cytoplasm. This subunit binds the periplasmic potassium ions and delivers the ions to the membrane domain of KdpB through an intramembrane tunnel. In Escherichia coli O157:H7, this protein is Potassium-transporting ATPase potassium-binding subunit.